Consider the following 600-residue polypeptide: Methionine--tRNA ligase (600 aa).

The 'HIGH' region signature appears at 12–22 (PYANGPRHIGH). Residues C144, C147, C157, and C160 each contribute to the Zn(2+) site. A 'KMSKS' region motif is present at residues 351–355 (KFSSS). ATP is bound at residue S354.

Belongs to the class-I aminoacyl-tRNA synthetase family. MetG type 1 subfamily. In terms of assembly, monomer. The cofactor is Zn(2+).

The protein resides in the cytoplasm. The enzyme catalyses tRNA(Met) + L-methionine + ATP = L-methionyl-tRNA(Met) + AMP + diphosphate. Is required not only for elongation of protein synthesis but also for the initiation of all mRNA translation through initiator tRNA(fMet) aminoacylation. The polypeptide is Methionine--tRNA ligase (Chloroflexus aurantiacus (strain ATCC 29364 / DSM 637 / Y-400-fl)).